A 423-amino-acid chain; its full sequence is Innexin eat-5 (423 aa).

Helical transmembrane passes span 25 to 41, 102 to 122, 277 to 297, and 341 to 361; these read YYYS…TITA, PFIM…WSML, IFLF…FDSI, and HSIL…IILL.

This sequence belongs to the pannexin family. As to quaternary structure, heterooligomer of eat-5 and another innexin. As to expression, expressed in pharyngeal muscles.

It localises to the cell membrane. The protein localises to the cell junction. The protein resides in the gap junction. Functionally, structural component of the gap junctions. Required for synchronized pharyngeal muscle contractions. The polypeptide is Innexin eat-5 (eat-5) (Caenorhabditis elegans).